The primary structure comprises 263 residues: Cell division protein DivIB (263 aa).

At 1-32 the chain is on the cytoplasmic side; sequence MNPGQDREKIVNIEERIPKIKEQRKQKANRRL. Residues 33 to 53 form a helical membrane-spanning segment; the sequence is ISFIMLFFIMVLIIVYLQTPI. An alpha region spans residues 51–123; it reads TPISKVSTIS…NKINIAIEEY (73 aa). In terms of domain architecture, POTRA spans 54–123; that stretch reads SKVSTISVTG…NKINIAIEEY (70 aa). Topologically, residues 54–263 are extracellular; that stretch reads SKVSTISVTG…DKAAKKEDEN (210 aa). Residues 124 to 251 are beta; sequence KAIAYLEKDD…EVATYFEEFG (128 aa). The gamma stretch occupies residues 229-263; the sequence is SQLSSNKKGIIHLEVATYFEEFGKNDKAAKKEDEN.

The protein belongs to the FtsQ/DivIB family. DivIB subfamily. As to quaternary structure, interacts with FtsL, DivIC and PBP-2B.

It localises to the cell membrane. In terms of biological role, cell division protein that may be involved in stabilizing or promoting the assembly of the division complex. Plays an essential role in division at high temperatures, maybe by protecting FtsL from degradation or by promoting formation of the FtsL-DivIC complex. May modulate the transpeptidase activity of PBP-2B. Also required for efficient sporulation at all temperatures. Could be directly involved in the engulfment process or be required to form a sporulation septum competent for engulfment. Influences the Spo0J/Soj system of chromosome segregation. The protein is Cell division protein DivIB of Bacillus subtilis (strain 168).